Here is a 1170-residue protein sequence, read N- to C-terminus: MKVEELIIDGFKSYATRTVITDWDPQFNAITGLNGSGKSNILDAICFVLGIASMSTVRASSLQDLIYKRGQAGVTKASVTIVFDNTDKSNSPIGFTNSPQISVTRQVVLGGTSKYLINGHRAPQQSVLQLFQSVQLNINNPNFLIMQGKITKVLNMKPSEILSLIEEAAGTKMFEDRREKAERTMSKKETKLQENRTLLTEEIEPKLEKLRNEKRMFLEFQSTQTDLEKTERIVVSYEYYNIKHKHTSIRETLENGETRMKMLNEFVKKTSEEIDSLNEDVEEIKLQKEKELHKEGTISKLENKENGLLNEISRLKTSLSIKVENLNDTTEKSKALESEIASSSAKLIEKKSAYANTEKDYKMVQEQLSKQRDLYKRKEELVSTLTTGISSTGAADGGYNAQLAKAKTELNEVSLAIKKSSMKMELLKKELLTIEPKLKEATKDNELNVKHVKQCQETCDKLRARLVEYGFDPSRIKDLKQREDKLKSHYYQTCKNSEYLKRRVTNLEFNYTKPYPNFEASFVHGVVGQLFQIDNDNIRYATALQTCAGGRLFNVVVQDSQTATQLLERGRLRKRVTIIPLDKIYTRPISSQVLDLAKKIAPGKVELAINLIRFDESITKAMEFIFGNSLICEDPETAKKITFHPKIRARSITLQGDVYDPEGTLSGGSRNTSESLLVDIQKYNQIQKQIETIQADLNHVTEELQTQYATSQKTKTIQSDLNLSLHKLDLAKRNLDANPSSQIIARNEEILRDIGECENEIKTKQMSLKKCQEEVSTIEKDMKEYDSDKGSKLNELKKELKLLAKELEEQESESERKYDLFQNLELETEQLSSELDSNKTLLHNHLKSIESLKLENSDLEGKIRGVEDDLVTVQTELNEEKKRLMDIDDELNELETLIKKKQDEKKSSELELQKLVHDLNKYKSNTNNMEKIIEDLRQKHEFLEDFDLVRNIVKQNEGIDLDTYRERSKQLNEKFQELRKKVNPNIMNMIENVEKKEAALKTMIKTIEKDKMKIQETISKLNEYKRETLVKTWEKVTLDFGNIFADLLPNSFAKLVPCEGKDVTQGLEVKVKLGNIWKESLIELSGGQRSLIALSLIMALLQFRPAPMYILDEVDAALDLSHTQNIGHLIKTRFKGSQFIVVSLKEGMFANANRVFRTRFQDGTSVVSIM.

32 to 39 (GLNGSGKS) is a binding site for ATP. A coiled-coil region spans residues 172–469 (KMFEDRREKA…DKLRARLVEY (298 aa)). Positions 523 to 641 (VHGVVGQLFQ…CEDPETAKKI (119 aa)) constitute an SMC hinge domain. A coiled-coil region spans residues 678–1027 (VDIQKYNQIQ…ISKLNEYKRE (350 aa)).

It belongs to the SMC family. SMC2 subfamily. As to quaternary structure, forms a heterodimer with SMC4. Component of the condensin complex, which contains the SMC2 and SMC4 heterodimer, and three non SMC subunits that probably regulate the complex: BRN1, YCS4 and YCG1/YCS5.

It localises to the nucleus. It is found in the cytoplasm. Its subcellular location is the chromosome. In terms of biological role, central component of the condensin complex, a complex required for conversion of interphase chromatin into mitotic-like condense chromosomes. The condensin complex probably introduces positive supercoils into relaxed DNA in the presence of type I topoisomerases and converts nicked DNA into positive knotted forms in the presence of type II topoisomerases. This is Structural maintenance of chromosomes protein 2 (SMC2) from Saccharomyces cerevisiae (strain ATCC 204508 / S288c) (Baker's yeast).